Reading from the N-terminus, the 280-residue chain is Tumor necrosis factor ligand superfamily member 6 (280 aa).

Over 1-80 (MQQPLNYPYP…KTRRDHNTGL (80 aa)) the chain is Cytoplasmic. The tract at residues 20–71 (SSPWGPPGSVLPCPSSVPGRPGQRRPPPPPPPTLPPPPPPPPLPPLPLPPLK) is disordered. The span at 43–69 (RRPPPPPPPTLPPPPPPPPLPPLPLPP) shows a compositional bias: pro residues. The helical; Signal-anchor for type II membrane protein transmembrane segment at 81 to 101 (CLLVMFFMVLVALVGLGLGMF) threads the bilayer. The Extracellular segment spans residues 102 to 280 (QLFHLQKELA…SKTFFGLYKL (179 aa)). The THD domain occupies 144-280 (KVAHLTGKPN…SKTFFGLYKL (137 aa)). Residue N183 is glycosylated (N-linked (GlcNAc...) asparagine). An intrachain disulfide couples C201 to C232. N-linked (GlcNAc...) asparagine glycosylation is found at N249 and N259.

Belongs to the tumor necrosis factor family. In terms of assembly, homotrimer. Interacts with ARHGAP9, BAIAP2L1, BTK, CACNB3, CACNB4, CRK, DLG2, DNMBP, DOCK4, EPS8L3, FGR, FYB1, FYN, HCK, ITK, ITSN2, KALRN, LYN, MACC1, MIA, MPP4, MYO15A, NCF1, NCK1, NCK2, NCKIPSD, OSTF1, PIK3R1, PSTPIP1, RIMBP3C, SAMSN1, SH3GL3, SH3PXD2B, SH3PXD2A, SH3RF2, SKAP2, SNX33, SNX9, SORBS3, SPTA1, SRC, SRGAP1, SRGAP2, SRGAP3, TEC, TJP3 and YES1. The soluble form derives from the membrane form by proteolytic processing. The membrane-bound form undergoes two successive intramembrane proteolytic cleavages. The first one is processed by ADAM10 producing an N-terminal fragment, which lacks the receptor-binding extracellular domain. This ADAM10-processed FasL (FasL APL) remnant form is still membrane anchored and further processed by SPPL2A that liberates the FasL intracellular domain (FasL ICD). FasL shedding by ADAM10 is a prerequisite for subsequent intramembrane cleavage by SPPL2A in T-cells. Post-translationally, phosphorylated by FGR on tyrosine residues; this is required for ubiquitination and subsequent internalization. In terms of processing, N-glycosylated. Glycosylation enhances apoptotic activity. Monoubiquitinated.

The protein localises to the cell membrane. It is found in the cytoplasmic vesicle lumen. It localises to the lysosome lumen. The protein resides in the secreted. Its subcellular location is the nucleus. Cytokine that binds to TNFRSF6/FAS, a receptor that transduces the apoptotic signal into cells. Involved in cytotoxic T-cell-mediated apoptosis, natural killer cell-mediated apoptosis and in T-cell development. Initiates fratricidal/suicidal activation-induced cell death (AICD) in antigen-activated T-cells contributing to the termination of immune responses. TNFRSF6/FAS-mediated apoptosis has also a role in the induction of peripheral tolerance. Binds to TNFRSF6B/DcR3, a decoy receptor that blocks apoptosis. Functionally, induces FAS-mediated activation of NF-kappa-B, initiating non-apoptotic signaling pathways. Can induce apoptosis but does not appear to be essential for this process. Its function is as follows. Cytoplasmic form induces gene transcription inhibition. This is Tumor necrosis factor ligand superfamily member 6 (FASLG) from Felis catus (Cat).